The following is a 273-amino-acid chain: Ribosomal RNA small subunit methyltransferase A (273 aa).

S-adenosyl-L-methionine-binding residues include asparagine 18, leucine 20, glycine 45, glutamate 66, aspartate 91, and asparagine 113.

The protein belongs to the class I-like SAM-binding methyltransferase superfamily. rRNA adenine N(6)-methyltransferase family. RsmA subfamily.

It localises to the cytoplasm. The catalysed reaction is adenosine(1518)/adenosine(1519) in 16S rRNA + 4 S-adenosyl-L-methionine = N(6)-dimethyladenosine(1518)/N(6)-dimethyladenosine(1519) in 16S rRNA + 4 S-adenosyl-L-homocysteine + 4 H(+). Its function is as follows. Specifically dimethylates two adjacent adenosines (A1518 and A1519) in the loop of a conserved hairpin near the 3'-end of 16S rRNA in the 30S particle. May play a critical role in biogenesis of 30S subunits. This chain is Ribosomal RNA small subunit methyltransferase A, found in Escherichia coli O157:H7.